We begin with the raw amino-acid sequence, 195 residues long: Recombination protein RecR (195 aa).

The segment at 53–68 (CSVCFNIDVKSPCSIC) adopts a C4-type zinc-finger fold. The Toprim domain occupies 76-171 (QLLCIVEELG…KITRLACGIP (96 aa)).

The protein belongs to the RecR family.

Functionally, may play a role in DNA repair. It seems to be involved in an RecBC-independent recombinational process of DNA repair. It may act with RecF and RecO. In Ehrlichia canis (strain Jake), this protein is Recombination protein RecR.